Consider the following 90-residue polypeptide: Small ribosomal subunit protein bS20 (90 aa).

It belongs to the bacterial ribosomal protein bS20 family.

Functionally, binds directly to 16S ribosomal RNA. This Roseiflexus sp. (strain RS-1) protein is Small ribosomal subunit protein bS20.